Consider the following 130-residue polypeptide: UPF0251 protein Swol_2090 (130 aa).

Belongs to the UPF0251 family.

This chain is UPF0251 protein Swol_2090, found in Syntrophomonas wolfei subsp. wolfei (strain DSM 2245B / Goettingen).